The following is a 650-amino-acid chain: Macrolide export ATP-binding/permease protein MacB (650 aa).

An ABC transporter domain is found at 2–238 (IDIKGIRKSY…PTTAQEKRQE (237 aa)). 38–45 (GPSGSGKS) is an ATP binding site. The next 4 helical transmembrane spans lie at 267 to 287 (GLSM…LALG), 531 to 551 (IAAI…LVSV), 580 to 600 (IVVS…FSLL), and 610 to 630 (VVSA…GIVF).

The protein belongs to the ABC transporter superfamily. Macrolide exporter (TC 3.A.1.122) family. As to quaternary structure, homodimer.

It localises to the cell inner membrane. Non-canonical ABC transporter that contains transmembrane domains (TMD), which form a pore in the inner membrane, and an ATP-binding domain (NBD), which is responsible for energy generation. Confers resistance against macrolides. This Bdellovibrio bacteriovorus (strain ATCC 15356 / DSM 50701 / NCIMB 9529 / HD100) protein is Macrolide export ATP-binding/permease protein MacB.